A 460-amino-acid polypeptide reads, in one-letter code: Cysteine--tRNA ligase (460 aa).

Cys-28 is a binding site for Zn(2+). Residues 30–40 (MTVYDYCHLGH) carry the 'HIGH' region motif. Zn(2+) is bound by residues Cys-209, His-234, and Glu-238. Positions 266–270 (KMSKS) match the 'KMSKS' region motif. Lys-269 is an ATP binding site.

The protein belongs to the class-I aminoacyl-tRNA synthetase family. As to quaternary structure, monomer. Zn(2+) serves as cofactor.

It is found in the cytoplasm. It catalyses the reaction tRNA(Cys) + L-cysteine + ATP = L-cysteinyl-tRNA(Cys) + AMP + diphosphate. This Pseudomonas aeruginosa (strain LESB58) protein is Cysteine--tRNA ligase.